Here is a 603-residue protein sequence, read N- to C-terminus: Elongation factor 4 (603 aa).

The tr-type G domain occupies S7–K189. GTP is bound by residues D19–T24 and N136–D139.

It belongs to the TRAFAC class translation factor GTPase superfamily. Classic translation factor GTPase family. LepA subfamily.

It is found in the cell inner membrane. It carries out the reaction GTP + H2O = GDP + phosphate + H(+). In terms of biological role, required for accurate and efficient protein synthesis under certain stress conditions. May act as a fidelity factor of the translation reaction, by catalyzing a one-codon backward translocation of tRNAs on improperly translocated ribosomes. Back-translocation proceeds from a post-translocation (POST) complex to a pre-translocation (PRE) complex, thus giving elongation factor G a second chance to translocate the tRNAs correctly. Binds to ribosomes in a GTP-dependent manner. This Prochlorococcus marinus (strain NATL2A) protein is Elongation factor 4.